A 180-amino-acid chain; its full sequence is ATP synthase subunit delta (180 aa).

The protein belongs to the ATPase delta chain family. As to quaternary structure, F-type ATPases have 2 components, F(1) - the catalytic core - and F(0) - the membrane proton channel. F(1) has five subunits: alpha(3), beta(3), gamma(1), delta(1), epsilon(1). F(0) has three main subunits: a(1), b(2) and c(10-14). The alpha and beta chains form an alternating ring which encloses part of the gamma chain. F(1) is attached to F(0) by a central stalk formed by the gamma and epsilon chains, while a peripheral stalk is formed by the delta and b chains.

It is found in the cell membrane. F(1)F(0) ATP synthase produces ATP from ADP in the presence of a proton or sodium gradient. F-type ATPases consist of two structural domains, F(1) containing the extramembraneous catalytic core and F(0) containing the membrane proton channel, linked together by a central stalk and a peripheral stalk. During catalysis, ATP synthesis in the catalytic domain of F(1) is coupled via a rotary mechanism of the central stalk subunits to proton translocation. Its function is as follows. This protein is part of the stalk that links CF(0) to CF(1). It either transmits conformational changes from CF(0) to CF(1) or is implicated in proton conduction. The sequence is that of ATP synthase subunit delta from Mycoplasma mobile (strain ATCC 43663 / 163K / NCTC 11711) (Mesomycoplasma mobile).